Consider the following 297-residue polypeptide: Retroviral cyclin (297 aa).

Residues 21-113 (PVYWKELLNW…KPSLLLTETM (93 aa)) enclose the Cyclin N-terminal domain. Residues 21 to 113 (PVYWKELLNW…KPSLLLTETM (93 aa)) form a transcription activation domain region. Residues 222 to 270 (QINLDFAEAEQREAAERRALLEREREQQLQEARERLDDVMAVLEAEVAI) are a coiled coil.

The protein belongs to the cyclin family. In terms of assembly, interacts (via transcription activation domain) with host TAF9 in vitro. Interacts with host CDK3 and CDK8.

The protein localises to the host nucleus. In terms of biological role, transforming protein which induces the development of dermal sarcomas. Induces positive and negative regulation of transcription from host and viral promoters by interacting with various cellular factors involved in protein transcription regulation. The sequence is that of Retroviral cyclin (orfA) from Sander vitreus (Walleye).